The sequence spans 61 residues: uncharacterized protein (61 aa).

Helical transmembrane passes span 5–25 and 29–49; these read MLYF…SLLL and YILT…PWYT.

It localises to the membrane. This is an uncharacterized protein from Saccharomyces cerevisiae (strain ATCC 204508 / S288c) (Baker's yeast).